Reading from the N-terminus, the 443-residue chain is Methylenetetrahydrofolate--tRNA-(uracil-5-)-methyltransferase TrmFO (443 aa).

Residue 8 to 13 (GAGLAG) participates in FAD binding.

Belongs to the MnmG family. TrmFO subfamily. Requires FAD as cofactor.

The protein localises to the cytoplasm. It carries out the reaction uridine(54) in tRNA + (6R)-5,10-methylene-5,6,7,8-tetrahydrofolate + NADH + H(+) = 5-methyluridine(54) in tRNA + (6S)-5,6,7,8-tetrahydrofolate + NAD(+). The catalysed reaction is uridine(54) in tRNA + (6R)-5,10-methylene-5,6,7,8-tetrahydrofolate + NADPH + H(+) = 5-methyluridine(54) in tRNA + (6S)-5,6,7,8-tetrahydrofolate + NADP(+). Functionally, catalyzes the folate-dependent formation of 5-methyl-uridine at position 54 (M-5-U54) in all tRNAs. The sequence is that of Methylenetetrahydrofolate--tRNA-(uracil-5-)-methyltransferase TrmFO from Thermus thermophilus (strain ATCC 27634 / DSM 579 / HB8).